We begin with the raw amino-acid sequence, 110 residues long: Small ribosomal subunit protein bS18c (110 aa).

This sequence belongs to the bacterial ribosomal protein bS18 family. As to quaternary structure, part of the 30S ribosomal subunit.

It is found in the plastid. Its subcellular location is the chloroplast. This is Small ribosomal subunit protein bS18c (rps18) from Pisum sativum (Garden pea).